A 541-amino-acid chain; its full sequence is Formimidoyltransferase-cyclodeaminase (541 aa).

The tract at residues 1–181 (MSQLVECVPN…GATVTGARKF (181 aa)) is formiminotransferase N-subdomain. His-82 serves as the catalytic For formimidoyltransferase activity. Folate is bound at residue 163-172 (GPSSFVPSWG). Residues 182–326 (LIAFNINLLS…PKERIIEYLV (145 aa)) form a formiminotransferase C-subdomain region. A linker region spans residues 327–334 (PDSGPEQS). A cyclodeaminase/cyclohydrolase region spans residues 335–541 (LLDTSLRGFV…VLGSLEARKE (207 aa)). Catalysis depends on Asp-412, which acts as the For cyclodeaminase activity. Position 520 is a phosphoserine (Ser-520).

It in the C-terminal section; belongs to the cyclodeaminase/cyclohydrolase family. The protein in the N-terminal section; belongs to the formiminotransferase family. Homooctamer, including four polyglutamate binding sites. The subunits are arranged as a tetramer of dimers, and form a planar ring-shaped structure.

The protein resides in the cytoplasm. It localises to the cytoskeleton. Its subcellular location is the microtubule organizing center. It is found in the centrosome. The protein localises to the centriole. The protein resides in the golgi apparatus. It catalyses the reaction 5-formimidoyltetrahydrofolate + L-glutamate = N-formimidoyl-L-glutamate + (6S)-5,6,7,8-tetrahydrofolate. The catalysed reaction is (6S)-5-formyl-5,6,7,8-tetrahydrofolate + L-glutamate = N-formyl-L-glutamate + (6S)-5,6,7,8-tetrahydrofolate + H(+). The enzyme catalyses 5-formimidoyltetrahydrofolate + 2 H(+) = (6R)-5,10-methenyltetrahydrofolate + NH4(+). It participates in amino-acid degradation; L-histidine degradation into L-glutamate; L-glutamate from N-formimidoyl-L-glutamate (transferase route): step 1/1. Its pathway is one-carbon metabolism; tetrahydrofolate interconversion. In terms of biological role, folate-dependent enzyme, that displays both transferase and deaminase activity. Serves to channel one-carbon units from formiminoglutamate to the folate pool. Its function is as follows. Binds and promotes bundling of vimentin filaments originating from the Golgi. The protein is Formimidoyltransferase-cyclodeaminase (Ftcd) of Mus musculus (Mouse).